The chain runs to 92 residues: Small ribosomal subunit protein uS19c (92 aa).

Belongs to the universal ribosomal protein uS19 family.

It localises to the plastid. The protein localises to the chloroplast. Functionally, protein S19 forms a complex with S13 that binds strongly to the 16S ribosomal RNA. The polypeptide is Small ribosomal subunit protein uS19c (Fagopyrum esculentum subsp. ancestrale (Wild buckwheat)).